The following is a 1031-amino-acid chain: Receptor-like protein EIX1 (1031 aa).

Positions 1–29 (MDKWKYARLAQFLFTLSLLFLETSFGLGG) are cleaved as a signal peptide. A glycan (N-linked (GlcNAc...) asparagine) is linked at Asn-30. The interval 30–113 (NKTLCLDKER…PRLTGKLSPS (84 aa)) is N-cap. At 30 to 971 (NKTLCLDKER…DEEEEFPSLE (942 aa)) the chain is on the extracellular side. One copy of the LRR 1 repeat lies at 117 to 140 (LEYLNYLDLSVNEFERSEIPRFIG). The LRR 2; degenerate repeat unit spans residues 142–165 (LKRLEYLNLSASFFSGVIPIQFQN). 2 N-linked (GlcNAc...) asparagine glycosylation sites follow: Asn-149 and Asn-165. LRR repeat units lie at residues 166 to 189 (LTSLRTLDLGENNLIVKDLRWLSH), 191 to 215 (SSLEFLSLSSSNFQVNNWFQEITKV), 216 to 240 (PSLKELDLSGCGLSKLVPSQADLAN), and 243 to 266 (LISLSVLHLCCNEFSSSSEYSWVF). Asn-240 is a glycosylation site (N-linked (GlcNAc...) asparagine). Asn-267 carries an N-linked (GlcNAc...) asparagine glycan. 14 LRR repeats span residues 269–292 (TTSLTSIDLLYNQLSGQIDDRFGT), 293–317 (LMYLEHLDLANNLKIEGGVPSSFGN), 318–341 (LTRLRHLDMSNTQTVQWLPELFLR), 346–369 (RKSLEVLGLNENSLFGSIVNATRF), 370–393 (SSLKKLYLQKNMLNGSFMESAGQV), 394–416 (STLEYLDLSENQMRGALPDLALF), 417–440 (PSLRELHLGSNQFRGRIPQGIGKL), 441–463 (SQLRILDVSSNRLEGLPESMGQL), 465–487 (NLESFDASYNVLKGTITESHLSN), 488–509 (LSSLVDLDLSFNSLALKTSFNW), 512–536 (PFQLQVISLPSCNLGPSFPKWLQNQ), 538–559 (NYTVLDISLASISDTLPSWFSS), 561–584 (PPDLKILNLSNNQISGRVSDLIEN), and 586–611 (YGYRVIDLSYNNFSGALPLVPTNVQI). A glycan (N-linked (GlcNAc...) asparagine) is linked at Asn-317. N-linked (GlcNAc...) asparagine glycans are attached at residues Asn-365 and Asn-383. N-linked (GlcNAc...) asparagine glycosylation is present at Asn-487. Residues Asn-538, Asn-568, and Asn-597 are each glycosylated (N-linked (GlcNAc...) asparagine). Residues 612–629 (FYLHKNQFFGSISSICRS) form an LRR 21; degenerate repeat. LRR repeat units follow at residues 630–654 (RTSPTSLDLSHNQFSGELPDCWMNM), 655–678 (TSLAVLNLAYNNFSGEIPHSLGSL), 679–703 (TNLKALYIRQNSLSGMLPSFSQCQG), 705–725 (QILDLGGNKLTGSIPGWIGTD), 726–750 (LLNLRILSLRFNRLHGSIPSIICQL), and 752–773 (FLQILDLSANGLSGKIPHCFNN). Asn-653 and Asn-666 each carry an N-linked (GlcNAc...) asparagine glycan. N-linked (GlcNAc...) asparagine glycosylation is found at Asn-773 and Asn-781. LRR repeat units follow at residues 823–847 (LLYLKTIDLSSNELIGGVPKEIADM), 848–871 (RGLKSLNLSRNELNGTVIEGIGQM), 872–895 (RMLESLDMSRNQLSGVIPQDLANL), and 896–918 (TFLSVLDLSNNQLSGRIPSSTQL). N-linked (GlcNAc...) asparagine glycans are attached at residues Asn-854, Asn-861, and Asn-894. The C-cap/acidic domain stretch occupies residues 919-971 (QSFDRSSYSDNAQLCGPPLQECPGYAPPSPLIDHGSNNNPQEHDEEEEFPSLE). The chain crosses the membrane as a helical span at residues 972–992 (FYISMVLSFFVAFWGILGCLI). Residues 993-1031 (VNSSWRNAYFKFLTDTTSWLDMISRVWFARLKKKLRRAR) lie on the Cytoplasmic side of the membrane.

This sequence belongs to the RLP family. In terms of assembly, interacts with EIX elicitor protein.

Its subcellular location is the cell membrane. Functionally, involved in plant defense. Confers resistance to the fungal pathogen T.viride through recognition of the EIX elicitor protein. The polypeptide is Receptor-like protein EIX1 (Solanum lycopersicum (Tomato)).